Reading from the N-terminus, the 385-residue chain is Glycine/sarcosine/betaine reductase complex component C subunit alpha (385 aa).

The active site involves Cys359.

As to quaternary structure, heterooctamer of four alpha and four beta subunits. Component of the glycine, sarcosine and betaine reductase complexes, together with proteins A and B.

The catalysed reaction is acetyl phosphate + [thioredoxin]-disulfide + NH4(+) + H2O = [thioredoxin]-dithiol + glycine + phosphate + H(+). The enzyme catalyses acetyl phosphate + methylamine + [thioredoxin]-disulfide + H2O = sarcosine + [thioredoxin]-dithiol + phosphate + H(+). It carries out the reaction acetyl phosphate + trimethylamine + [thioredoxin]-disulfide + H2O = glycine betaine + [thioredoxin]-dithiol + phosphate + H(+). In the first step of glycine, betaine and sarcosine reductases, the substrate is bound to component PB via a Schiff base intermediate. Then the PB-activated substrate is nucleophilically attacked by the selenol anion of component PA to transform it to a carboxymethylated selenoether and the respective amine. By action of component PC, acetyl phosphate is formed, leaving component PA in its oxidized state. Finally component PA becomes reduced by the thioredoxin system to start a new catalytic cycle of reductive deamination. The polypeptide is Glycine/sarcosine/betaine reductase complex component C subunit alpha (grdD) (Peptoclostridium acidaminophilum (Eubacterium acidaminophilum)).